The primary structure comprises 286 residues: Pyridoxal kinase PdxY (286 aa).

Residues serine 9 and 44–45 contribute to the substrate site; that span reads TQ. Residues aspartate 111, alanine 143, glutamate 148, lysine 181, and 208–211 each bind ATP; that span reads RPLV. Aspartate 222 is a substrate binding site.

This sequence belongs to the pyridoxine kinase family. PdxY subfamily. As to quaternary structure, homodimer. Mg(2+) is required as a cofactor.

It carries out the reaction pyridoxal + ATP = pyridoxal 5'-phosphate + ADP + H(+). It participates in cofactor metabolism; pyridoxal 5'-phosphate salvage; pyridoxal 5'-phosphate from pyridoxal: step 1/1. Functionally, pyridoxal kinase involved in the salvage pathway of pyridoxal 5'-phosphate (PLP). Catalyzes the phosphorylation of pyridoxal to PLP. The chain is Pyridoxal kinase PdxY from Pectobacterium atrosepticum (strain SCRI 1043 / ATCC BAA-672) (Erwinia carotovora subsp. atroseptica).